The sequence spans 128 residues: MTIDEIIEAIEKLTVSELAELVKKLEDKFGVTAAAPVAVAAAPVAGAAAGAAQEEKTEFDVVLKSFGQNKIQVIKVVREITGLGLKEAKDLVEKAGSPDAVIKSGVSKEEAEEIKKKLEEAGAEVELK.

In terms of assembly, homodimer. Part of the 50S ribosomal subunit; present in 6 copies per ribosome. Forms part of the ribosomal stalk which helps the ribosome interact with GTP-bound translation factors. Forms a heptameric L10(L12)2(L12)2(L12)2 complex, where L10 forms an elongated spine to which 3 L12 dimers bind in a sequential fashion.

Forms part of the ribosomal stalk which helps the ribosome interact with GTP-bound translation factors. Is thus essential for accurate translation. This chain is Large ribosomal subunit protein bL12, found in Thermotoga maritima (strain ATCC 43589 / DSM 3109 / JCM 10099 / NBRC 100826 / MSB8).